Reading from the N-terminus, the 206-residue chain is Large ribosomal subunit protein uL4 (206 aa).

It belongs to the universal ribosomal protein uL4 family. In terms of assembly, part of the 50S ribosomal subunit.

In terms of biological role, one of the primary rRNA binding proteins, this protein initially binds near the 5'-end of the 23S rRNA. It is important during the early stages of 50S assembly. It makes multiple contacts with different domains of the 23S rRNA in the assembled 50S subunit and ribosome. Forms part of the polypeptide exit tunnel. This Nitrobacter hamburgensis (strain DSM 10229 / NCIMB 13809 / X14) protein is Large ribosomal subunit protein uL4.